A 591-amino-acid chain; its full sequence is Pentatricopeptide repeat-containing protein At3g47530 (591 aa).

PPR repeat units follow at residues 76-110, 112-146, 147-177, 178-208, 216-250, 251-281, 282-316, 317-351, and 354-384; these read TLSH…SSLP, NPLS…GFLS, DSLL…IPKR, DTVS…MKND, DGVT…GLSG, ALNL…MRER, NVVS…GISP, EEQT…EFKI, and NLHH…MEMK. The segment at 389–464 is type E motif; the sequence is IWRTLLGACR…KPGCSAIELQ (76 aa). Residues 465 to 495 are type E(+) motif; the sequence is GTVHEFIVDDVSHPRKEEIYKMLAEINQQLK. The type DYW motif stretch occupies residues 496 to 591; that stretch reads IAGYVAEITS…GGSCSCNDFW (96 aa).

This sequence belongs to the PPR family. PCMP-H subfamily.

In Arabidopsis thaliana (Mouse-ear cress), this protein is Pentatricopeptide repeat-containing protein At3g47530 (PCMP-H76).